We begin with the raw amino-acid sequence, 309 residues long: Intron-encoded DNA endonuclease ai2a (309 aa).

This sequence belongs to the LAGLIDADG endonuclease family.

It localises to the mitochondrion. In terms of biological role, mitochondrial DNA endonuclease involved in intron homing. Cleaves only one strand of intronless DNA sequence at the site which coincides with the I-SceII cleavage recognition site. This Dictyostelium discoideum (Social amoeba) protein is Intron-encoded DNA endonuclease ai2a (ai2a).